Consider the following 201-residue polypeptide: Recombination protein RecR (201 aa).

The C4-type zinc-finger motif lies at 60 to 75; sequence CKVCGNIDTQNPCTVC. The region spanning 83 to 178 is the Toprim domain; sequence SIIVVVADVA…KVTRLAHGVP (96 aa).

Belongs to the RecR family.

May play a role in DNA repair. It seems to be involved in an RecBC-independent recombinational process of DNA repair. It may act with RecF and RecO. This Rhodopseudomonas palustris (strain BisB18) protein is Recombination protein RecR.